Here is a 255-residue protein sequence, read N- to C-terminus: Endonuclease 8 2 (255 aa).

Proline 2 acts as the Schiff-base intermediate with DNA in catalysis. The active-site Proton donor is the glutamate 3. Lysine 51 functions as the Proton donor; for beta-elimination activity in the catalytic mechanism. DNA is bound by residues glutamine 67 and asparagine 164. Residues 221 to 255 (WVYGRAGQGCRRCGTLIAYDTTDERVRYWCPACQR) form an FPG-type zinc finger. The active-site Proton donor; for delta-elimination activity is the arginine 245.

It belongs to the FPG family. Zn(2+) serves as cofactor.

It catalyses the reaction 2'-deoxyribonucleotide-(2'-deoxyribose 5'-phosphate)-2'-deoxyribonucleotide-DNA = a 3'-end 2'-deoxyribonucleotide-(2,3-dehydro-2,3-deoxyribose 5'-phosphate)-DNA + a 5'-end 5'-phospho-2'-deoxyribonucleoside-DNA + H(+). Functionally, involved in base excision repair of DNA damaged by oxidation or by mutagenic agents. Acts as a DNA glycosylase that recognizes and removes damaged bases. Has AP (apurinic/apyrimidinic) lyase activity and introduces nicks in the DNA strand. Cleaves the DNA backbone by beta-delta elimination to generate a single-strand break at the site of the removed base with both 3'- and 5'-phosphates. The polypeptide is Endonuclease 8 2 (nei2) (Mycobacterium bovis (strain ATCC BAA-935 / AF2122/97)).